The primary structure comprises 609 residues: Phosphoenolpyruvate carboxykinase [GTP] (609 aa).

Substrate is bound by residues Arg81 and 220–222 (YGG). Positions 229 and 249 each coordinate Mn(2+). Ser271 is a substrate binding site. 272 to 277 (ACGKTN) contributes to the GTP binding site. Cys273 is a catalytic residue. A Mn(2+)-binding site is contributed by Asp296. 387 to 389 (NSR) provides a ligand contact to substrate. GTP contacts are provided by residues Arg389, Arg420, and 515–518 (FGEN).

This sequence belongs to the phosphoenolpyruvate carboxykinase [GTP] family. As to quaternary structure, monomer. It depends on Mn(2+) as a cofactor.

It localises to the cytoplasm. The catalysed reaction is oxaloacetate + GTP = phosphoenolpyruvate + GDP + CO2. The protein operates within carbohydrate biosynthesis; gluconeogenesis. In terms of biological role, catalyzes the conversion of oxaloacetate (OAA) to phosphoenolpyruvate (PEP), the rate-limiting step in the metabolic pathway that produces glucose from lactate and other precursors derived from the citric acid cycle. This chain is Phosphoenolpyruvate carboxykinase [GTP], found in Mycobacterium leprae (strain Br4923).